The primary structure comprises 82 residues: Toxin Tpa7 (82 aa).

The first 20 residues, 1 to 20, serve as a signal peptide directing secretion; it reads MKGMILLISCLMLIEVVVEC. Residues 21-82 form the LCN-type CS-alpha/beta domain; it reads KEGYPLDTLN…KIWDLKKNKC (62 aa). 4 disulfide bridges follow: Cys32-Cys82, Cys36-Cys58, Cys44-Cys63, and Cys48-Cys65.

Belongs to the long (4 C-C) scorpion toxin superfamily. Sodium channel inhibitor family. Beta subfamily. Expressed by the venom gland.

The protein localises to the secreted. Beta toxins bind voltage-independently at site-4 of sodium channels (Nav) and shift the voltage of activation toward more negative potentials thereby affecting sodium channel activation and promoting spontaneous and repetitive firing. This Tityus pachyurus (Colombian scorpion) protein is Toxin Tpa7.